Consider the following 67-residue polypeptide: Bombesin (67 aa).

Residues 1-30 (MSLLPAVKVLPLGYLGIVLVFSLILRSAMV) form the signal peptide. A propeptide spanning residues 31 to 49 (DFIQDAGKLERIDTYKREA) is cleaved from the precursor. A Pyrrolidone carboxylic acid modification is found at Q50. Methionine amide is present on M64.

It belongs to the bombesin/neuromedin-B/ranatensin family. Expressed by the skin dorsal glands.

The protein resides in the secreted. Its function is as follows. Stimulates smooth muscle contraction in isolated rat stomach strip. The polypeptide is Bombesin (Sanguirana varians (Palawan frog)).